The chain runs to 261 residues: DNA oxidative demethylase ALKBH2 (261 aa).

Positions 1 to 57 (MDRFLVKGAQGGLLRKQEEQEPTGEEPAVLGGDKESTRKRPRREAPGNGGHSAGPSW) are disordered. Positions 3-7 (RFLVK) match the PCNA-binding motif. Residues 102–104 (FGK) and 122–124 (YTF) contribute to the substrate site. In terms of domain architecture, Fe2OG dioxygenase spans 152 to 257 (TFNFVLINRY…RVNLTFRKIL (106 aa)). Residues N159, Y161, and H171 each coordinate 2-oxoglutarate. Residues H171 and D173 each coordinate Fe cation. D174 lines the substrate pocket. 4 residues coordinate 2-oxoglutarate: H236, R248, T252, and R254. H236 serves as a coordination point for Fe cation.

This sequence belongs to the alkB family. Interacts with PCNA homotrimer; this interaction is enhanced during the S-phase of the cell cycle. Interacts with nucleolar proteins NCL, UBTF and NPM1. Interacts with XRCC5-XRCC6 heterodimer. Fe(2+) serves as cofactor. In terms of tissue distribution, detected in colon, small intestine, ovary, testis, prostate, skeletal muscle, heart, liver and urinary bladder.

Its subcellular location is the nucleus. It localises to the nucleolus. The protein resides in the nucleoplasm. The catalysed reaction is a methylated nucleobase within DNA + 2-oxoglutarate + O2 = a nucleobase within DNA + formaldehyde + succinate + CO2. The enzyme catalyses an N(1)-methyl-2'-deoxyadenosine in double-stranded DNA + 2-oxoglutarate + O2 = a 2'-deoxyadenosine in double-stranded DNA + formaldehyde + succinate + CO2 + H(+). It catalyses the reaction an N(1)-methyl-2'-deoxyadenosine in single-stranded DNA + 2-oxoglutarate + O2 = a 2'-deoxyadenosine in single-stranded DNA + formaldehyde + succinate + CO2 + H(+). It carries out the reaction an N(3)-methyl-2'-deoxycytidine in double-stranded DNA + 2-oxoglutarate + O2 = a 2'-deoxycytidine in double-stranded DNA + formaldehyde + succinate + CO2 + H(+). The catalysed reaction is an N(3)-methyl-2'-deoxycytidine in single-stranded DNA + 2-oxoglutarate + O2 = a 2'-deoxycytidine in single-stranded DNA + formaldehyde + succinate + CO2 + H(+). The enzyme catalyses a 1,N(6)-etheno-2'-deoxyadenosine in double-stranded DNA + 2-oxoglutarate + O2 + H2O = a 2'-deoxyadenosine in double-stranded DNA + glyoxal + succinate + CO2. It catalyses the reaction a 1,N(6)-etheno-2'-deoxyadenosine in single-stranded DNA + 2-oxoglutarate + O2 + H2O = a 2'-deoxyadenosine in single-stranded DNA + glyoxal + succinate + CO2. It carries out the reaction a 3,N(4)-etheno-2'-deoxycytidine in double-stranded DNA + 2-oxoglutarate + O2 + H2O = a 2'-deoxycytidine in double-stranded DNA + glyoxal + succinate + CO2. The catalysed reaction is a 3,N(4)-etheno-2'-deoxycytidine in single-stranded DNA + 2-oxoglutarate + O2 + H2O = a 2'-deoxycytidine in single-stranded DNA + glyoxal + succinate + CO2. The enzyme catalyses a 1,N(2)-etheno-2'-deoxyguanosine in double-stranded DNA + 2-oxoglutarate + O2 + H2O = a 2'-deoxyguanosine in double-stranded DNA + glyoxal + succinate + CO2. Its activity is regulated as follows. Activated by ascorbate and magnesium ions. Dioxygenase that repairs alkylated nucleic acid bases by direct reversal oxidative dealkylation. Can process both double-stranded (ds) and single-stranded (ss) DNA substrates, with a strong preference for dsDNA. Uses molecular oxygen, 2-oxoglutarate and iron as cofactors to oxidize the alkyl groups that are subsequently released as aldehydes, regenerating the undamaged bases. Probes the base pair stability, locates a weakened base pair and flips the damaged base to accommodate the lesion in its active site for efficient catalysis. Repairs monoalkylated bases, specifically N1-methyladenine and N3-methylcytosine, as well as higher order alkyl adducts such as bases modified with exocyclic bridged adducts known as etheno adducts including 1,N6-ethenoadenine, 3,N4-ethenocytosine and 1,N2-ethenoguanine. Acts as a gatekeeper of genomic integrity under alkylation stress. Efficiently repairs alkylated lesions in ribosomal DNA (rDNA). These lesions can cause ss- and dsDNA strand breaks that severely impair rDNA transcription. In a response mechanism to DNA damage, associates with PCNA at replication forks to repair alkylated adducts prior to replication. In Homo sapiens (Human), this protein is DNA oxidative demethylase ALKBH2 (ALKBH2).